Reading from the N-terminus, the 238-residue chain is tRNA (guanine-N(7)-)-methyltransferase (238 aa).

4 residues coordinate S-adenosyl-L-methionine: Glu-68, Glu-93, Asp-120, and Asp-143. The active site involves Asp-143. Residues Lys-147, Asp-179, and 216 to 219 (TKFE) each bind substrate.

It belongs to the class I-like SAM-binding methyltransferase superfamily. TrmB family.

The enzyme catalyses guanosine(46) in tRNA + S-adenosyl-L-methionine = N(7)-methylguanosine(46) in tRNA + S-adenosyl-L-homocysteine. It participates in tRNA modification; N(7)-methylguanine-tRNA biosynthesis. Functionally, catalyzes the formation of N(7)-methylguanine at position 46 (m7G46) in tRNA. The protein is tRNA (guanine-N(7)-)-methyltransferase of Shewanella baltica (strain OS155 / ATCC BAA-1091).